We begin with the raw amino-acid sequence, 991 residues long: Bone morphogenetic protein 1 (991 aa).

An N-terminal signal peptide occupies residues 1–25; it reads MPGVARPPLPLLSLPLLLLLLLLPR. Residues 26–125 constitute a propeptide that is removed on maturation; sequence AGRPLDLADY…RWRGRPRSRR (100 aa). The interval 86 to 131 is disordered; that stretch reads ARRPSIKAAGNSSALGGQGTSGQPQRESRGRWRGRPRSRRAATSRP. The span at 95–110 shows a compositional bias: polar residues; that stretch reads GNSSALGGQGTSGQPQ. Asn-96 is a glycosylation site (N-linked (GlcNAc...) asparagine). A compositionally biased stretch (basic residues) spans 116 to 127; it reads RWRGRPRSRRAA. Positions 126–325 constitute a Peptidase M12A domain; sequence AATSRPERVW…AQARKLYKCP (200 aa). An N-linked (GlcNAc...) asparagine glycan is attached at Asn-147. Cystine bridges form between Cys-168–Cys-324, Cys-188–Cys-210, Cys-190–Cys-191, and Cys-327–Cys-353. His-218 is a Zn(2+) binding site. Glu-219 is a catalytic residue. 2 residues coordinate Zn(2+): His-222 and His-228. 2 consecutive CUB domains span residues 327–439 and 440–551; these read CGET…YEAI and CGGD…NFFK. N-linked (GlcNAc...) asparagine glycans are attached at residues Asn-337 and Asn-368. 15 disulfides stabilise this stretch: Cys-380-Cys-402, Cys-440-Cys-466, Cys-493-Cys-515, Cys-556-Cys-568, Cys-564-Cys-577, Cys-579-Cys-592, Cys-596-Cys-622, Cys-649-Cys-671, Cys-712-Cys-723, Cys-719-Cys-732, Cys-734-Cys-747, Cys-752-Cys-778, Cys-805-Cys-827, Cys-865-Cys-895, and Cys-922-Cys-944. The EGF-like 1; calcium-binding domain maps to 552 to 593; it reads EVDECSRPNRGGCEQRCLNTLGSYKCSCDPGYELAPDKRRCE. The region spanning 596–707 is the CUB 3 domain; that stretch reads CGGFLTKLNG…KKGFKAHFFS (112 aa). N-linked (GlcNAc...) asparagine glycosylation occurs at Asn-604. One can recognise an EGF-like 2; calcium-binding domain in the interval 708 to 748; it reads DKDECSKDNGGCQQDCVNTFGSYECQCRSGFVLHDNKHDCK. CUB domains follow at residues 752 to 864 and 865 to 981; these read CEHK…HSTE and CGGQ…YTST. Arg-939 and Arg-942 each carry omega-N-methylarginine.

Interacts with POSTN, the interaction promotes deposition on the extracellular matrix. It depends on Zn(2+) as a cofactor. In terms of tissue distribution, at high levels in embryonic maternal deciduum and floor plate region of the neural tube. Less in developing membranous and endochondral bone, submucosa of intestine, dermis of skin and the mesenchyme of spleen and lung.

Its subcellular location is the golgi apparatus. It is found in the trans-Golgi network. It localises to the secreted. The protein resides in the extracellular space. The protein localises to the extracellular matrix. It carries out the reaction Cleavage of the C-terminal propeptide at Ala-|-Asp in type I and II procollagens and at Arg-|-Asp in type III.. Activity is increased by the procollagen C-endopeptidase enhancer protein. Metalloprotease that plays key roles in regulating the formation of the extracellular matrix (ECM) via processing of various precursor proteins into mature functional enzymes or structural proteins. Thereby participates in several developmental and physiological processes such as cartilage and bone formation, muscle growth and homeostasis, wound healing and tissue repair. Roles in ECM formation include cleavage of the C-terminal propeptides from procollagens such as procollagen I, II and III or the proteolytic activation of the enzyme lysyl oxidase LOX, necessary to formation of covalent cross-links in collagen and elastic fibers. Additional substrates include matricellular thrombospondin-1/THBS1 whose cleavage leads to cell adhesion disruption and TGF-beta activation. This chain is Bone morphogenetic protein 1 (Bmp1), found in Mus musculus (Mouse).